A 310-amino-acid polypeptide reads, in one-letter code: tRNA pseudouridine synthase B (310 aa).

D47 (nucleophile) is an active-site residue.

This sequence belongs to the pseudouridine synthase TruB family. Type 1 subfamily.

It carries out the reaction uridine(55) in tRNA = pseudouridine(55) in tRNA. Its function is as follows. Responsible for synthesis of pseudouridine from uracil-55 in the psi GC loop of transfer RNAs. The sequence is that of tRNA pseudouridine synthase B from Psychromonas ingrahamii (strain DSM 17664 / CCUG 51855 / 37).